A 409-amino-acid polypeptide reads, in one-letter code: Peptidase T (409 aa).

Histidine 78 is a Zn(2+) binding site. Aspartate 80 is a catalytic residue. Zn(2+) is bound at residue aspartate 140. Glutamate 173 (proton acceptor) is an active-site residue. Zn(2+) contacts are provided by glutamate 174, aspartate 196, and histidine 379.

This sequence belongs to the peptidase M20B family. The cofactor is Zn(2+).

It localises to the cytoplasm. The enzyme catalyses Release of the N-terminal residue from a tripeptide.. In terms of biological role, cleaves the N-terminal amino acid of tripeptides. This is Peptidase T from Salmonella paratyphi C (strain RKS4594).